We begin with the raw amino-acid sequence, 223 residues long: Small ribosomal subunit protein uS5 (223 aa).

Residues Met-1–Ala-15 show a composition bias toward low complexity. The interval Met-1–Lys-51 is disordered. Residues Thr-16 to Lys-51 are compositionally biased toward basic and acidic residues. The S5 DRBM domain occupies Phe-54–Val-117.

Belongs to the universal ribosomal protein uS5 family. As to quaternary structure, part of the 30S ribosomal subunit. Contacts proteins S4 and S8.

With S4 and S12 plays an important role in translational accuracy. Its function is as follows. Located at the back of the 30S subunit body where it stabilizes the conformation of the head with respect to the body. This chain is Small ribosomal subunit protein uS5, found in Paenarthrobacter aurescens (strain TC1).